We begin with the raw amino-acid sequence, 707 residues long: D-(-)-3-hydroxybutyrate oligomer hydrolase (707 aa).

A signal peptide spans 1 to 32; sequence MASVFKVRSASGHVPVVRTLAAMMAVTVVLTA. The Charge relay system role is filled by Ser321.

The protein belongs to the D-(-)-3-hydroxybutyrate oligomer hydrolase family.

The protein localises to the secreted. The catalysed reaction is (3R)-hydroxybutanoate dimer + H2O = 2 (R)-3-hydroxybutanoate + H(+). The protein operates within lipid metabolism; butanoate metabolism. Its function is as follows. Participates in the degradation of poly-3-hydroxybutyrate (PHB). It works downstream of poly(3-hydroxybutyrate) depolymerase, hydrolyzing D(-)-3-hydroxybutyrate oligomers of various length (3HB-oligomers) into 3HB-monomers. The chain is D-(-)-3-hydroxybutyrate oligomer hydrolase from Paraburkholderia xenovorans (strain LB400).